The sequence spans 352 residues: Ribosome biogenesis protein BRX1 homolog (352 aa).

The interval 1–55 (MGKFSKIKKVQEEESAHQKMEWEAAGAKDSSSDDSSDESDNDDQPKQATEETRKR) is disordered. A compositionally biased stretch (basic and acidic residues) spans 9 to 22 (KVQEEESAHQKMEW). The segment covering 32–42 (SDDSSDESDND) has biased composition (acidic residues). Residues 43–55 (DQPKQATEETRKR) show a composition bias toward basic and acidic residues. The Brix domain occupies 63–253 (ERVLVLCSRG…MVRLFAGSFE (191 aa)).

It belongs to the BRX1 family.

It localises to the nucleus. It is found in the nucleolus. Its function is as follows. Required for biogenesis of the 60S ribosomal subunit. This chain is Ribosome biogenesis protein BRX1 homolog, found in Caenorhabditis elegans.